The chain runs to 164 residues: Protein PPLZ02 (164 aa).

Residues 7 to 64 constitute a DNA-binding region (AP2/ERF); sequence RYRGFRQRHWGSWVSEIRHSILKTRIWQGTFESAEDAARAYDEAARLMCGTRARTNFP.

It localises to the nucleus. Functionally, essential for all lupin cells independent of the respective tissue. The polypeptide is Protein PPLZ02 (PPLZ02) (Lupinus polyphyllus (Large-leaved lupine)).